Reading from the N-terminus, the 120-residue chain is MSQSMYSYPAMTANVGDMAGYTGTTQSLGADIASERTAPSRACQGDLGMSHQDWQAQWNQAMEALARAYRRCRRALRQIGVLERPVGDSSDCGTIRVGSFRGRWLDPRHAGPATAADAGD.

This sequence belongs to the WXG100 family. ESAT-6 subfamily.

The protein resides in the secreted. This is ESAT-6-like protein EsxQ from Mycobacterium bovis (strain ATCC BAA-935 / AF2122/97).